A 349-amino-acid chain; its full sequence is MEFATVSPPDPGAAAAARARQDTLTKPRGALGRLEDLSVWIAACQGQCPPRQFERARVVVFAGDHGVARCGVSAYPPEVTAQMVANFDAGGAAINALAGVAGASVRVADLAVDADPPDDRIGANKVRRGSGDITVQDALTAEETERALSAGAAIADEEVDAGADLLIAGDMGIGNTTAAAVLVAALTNVEPVVAVGFGTGIDDAGWARKTAAVRDALFRARRVLPDPVALLRCAGGADLAALAGFCAQAAVRRTPLLLDGMAVTAAALVAEHLAPGARLWWQAGHRSTEPGHALALTALDLEPILDLRMRLGEGTGAALALPIVRAAVAALSSMATFAQAGVSDPSAHP.

Glu313 (proton acceptor) is an active-site residue.

The protein belongs to the CobT family.

It catalyses the reaction 5,6-dimethylbenzimidazole + nicotinate beta-D-ribonucleotide = alpha-ribazole 5'-phosphate + nicotinate + H(+). Its pathway is nucleoside biosynthesis; alpha-ribazole biosynthesis; alpha-ribazole from 5,6-dimethylbenzimidazole: step 1/2. Functionally, catalyzes the synthesis of alpha-ribazole-5'-phosphate from nicotinate mononucleotide (NAMN) and 5,6-dimethylbenzimidazole (DMB). The sequence is that of Nicotinate-nucleotide--dimethylbenzimidazole phosphoribosyltransferase from Mycobacterium avium (strain 104).